A 484-amino-acid polypeptide reads, in one-letter code: Argininosuccinate lyase (484 aa).

It belongs to the lyase 1 family. Argininosuccinate lyase subfamily.

It localises to the cytoplasm. The enzyme catalyses 2-(N(omega)-L-arginino)succinate = fumarate + L-arginine. It functions in the pathway amino-acid biosynthesis; L-arginine biosynthesis; L-arginine from L-ornithine and carbamoyl phosphate: step 3/3. In Methanocaldococcus jannaschii (strain ATCC 43067 / DSM 2661 / JAL-1 / JCM 10045 / NBRC 100440) (Methanococcus jannaschii), this protein is Argininosuccinate lyase.